A 491-amino-acid polypeptide reads, in one-letter code: MTAAAESTVALGGRFARELNELAVPWEAEEAPDPKLLVLNGPLAAELGLDPEYLSSEEGVRFLLGNHVPDGATPVAQAYAGHQFGGYSPLLGDGRALLLGELQDSRGRLRDLHLKGSGRTPFARAGDGRAVVGPMLREYIVSEAMHALGIPTTRSLAVVATGRQVRRDDMLPGAVLARVAGSHLRVGSFQYARVTENTELLRRLADHAISRHYPEAAAAENPYLALYRAVVAAQASLVAQWMLVGFVHGVMNTDNMTISGETIDYGPCAFIDAFNPAAVYSSIDVGGRYAYANQPVMAEWNLARLAEAMLPLIDEDQEAAVPVAVEALGGFRRQYSAAWSGGMATKLGLAAGEPEAAAGAEVQDLVDGVTGILKDGSVDYTLFFRNLAKAARGDSRPVRGMVMDLAAYDAWAERWQDLAPDAGLMDRTNPAYIPRNHLVEEALAAATGGDLDPLHRLLEAVSAPYSERPGLERYTQGAPEDFGTYMTFCGT.

Residues Gly92, Gly94, Arg95, Lys115, Asp127, Gly128, Arg178, and Arg185 each coordinate ATP. Catalysis depends on Asp254, which acts as the Proton acceptor. Mg(2+) is bound by residues Asn255 and Asp264. Asp264 contacts ATP.

This sequence belongs to the SELO family. Mg(2+) serves as cofactor. Requires Mn(2+) as cofactor.

The enzyme catalyses L-seryl-[protein] + ATP = 3-O-(5'-adenylyl)-L-seryl-[protein] + diphosphate. The catalysed reaction is L-threonyl-[protein] + ATP = 3-O-(5'-adenylyl)-L-threonyl-[protein] + diphosphate. It catalyses the reaction L-tyrosyl-[protein] + ATP = O-(5'-adenylyl)-L-tyrosyl-[protein] + diphosphate. It carries out the reaction L-histidyl-[protein] + UTP = N(tele)-(5'-uridylyl)-L-histidyl-[protein] + diphosphate. The enzyme catalyses L-seryl-[protein] + UTP = O-(5'-uridylyl)-L-seryl-[protein] + diphosphate. The catalysed reaction is L-tyrosyl-[protein] + UTP = O-(5'-uridylyl)-L-tyrosyl-[protein] + diphosphate. Its function is as follows. Nucleotidyltransferase involved in the post-translational modification of proteins. It can catalyze the addition of adenosine monophosphate (AMP) or uridine monophosphate (UMP) to a protein, resulting in modifications known as AMPylation and UMPylation. The protein is Protein nucleotidyltransferase YdiU of Pseudarthrobacter chlorophenolicus (strain ATCC 700700 / DSM 12829 / CIP 107037 / JCM 12360 / KCTC 9906 / NCIMB 13794 / A6) (Arthrobacter chlorophenolicus).